The chain runs to 774 residues: Formin-like protein 13 (774 aa).

An N-terminal signal peptide occupies residues 1-22 (MRRRVALSTAIALLVGAQLCVA). Pro residues predominate over residues 51–67 (PPPPMSGSEAVPPPPPA). Positions 51–78 (PPPPMSGSEAVPPPPPAAAASATTGGGR) are disordered. The span at 68 to 78 (AAASATTGGGR) shows a compositional bias: low complexity. The chain crosses the membrane as a helical span at residues 89 to 109 (IALSAGLVALAVASYSCCLLL). Disordered stretches follow at residues 130-163 (AAAA…DAIY), 176-338 (HEKS…HLKP), 374-402 (FLNS…RRLL), and 740-774 (GSGK…SSSS). Positions 194–216 (DLRPLPPLKRPESQPPPPPPSTP) are enriched in pro residues. A compositionally biased stretch (low complexity) spans 242–261 (SSFSRSTSQHSTLEQTAMPP). The segment covering 262–286 (MAAPAPPQTNPPRPVRPPPPPPPPR) has biased composition (pro residues). The 424-residue stretch at 326 to 749 (GAARPPKPPH…GSGKSFRVPA (424 aa)) folds into the FH2 domain.

Belongs to the formin-like family. Class-I subfamily.

The protein localises to the membrane. The protein is Formin-like protein 13 (FH13) of Oryza sativa subsp. japonica (Rice).